The primary structure comprises 459 residues: Polycomb protein mes-6 (459 aa).

5 WD repeats span residues serine 146–valine 186, cysteine 192–histidine 231, methionine 305–glutamate 346, serine 370–proline 409, and valine 415–lysine 454.

This sequence belongs to the WD repeat ESC family. As to quaternary structure, interacts directly with the N-terminal domain of mes-2. Forms a heterotrimeric complex with mes-2 and mes-3. Does not interact with mes-4. As to expression, in adults, it is predominantly expressed in the germline, and weakly expressed in intestinal cells.

It localises to the nucleus. Polycomb group (PcG) protein. PcG proteins act by forming multiprotein complexes, which are required to maintain the transcriptionally repressive state of homeotic genes throughout development. In association with the nfya-1-NF-Y complex, may play a role in repressing the expression of the homeobox protein egl-5 in tissues such as the head. PcG proteins are not required to initiate repression, but to maintain it during later stages of development. The mes-2/mes-3/mes-6 complex may participate in the global inactivation of the X chromosomes in germline cells. The complex may act via methylation of histone H3 'Lys-27', rendering chromatin heritably changed in its expressibility. This complex is required to exclude mes-4 from the inactivated X-chromosomes in germline cells. Required for small-RNA-induced H3K27 trimethylation. The chain is Polycomb protein mes-6 from Caenorhabditis elegans.